The sequence spans 260 residues: MLHIADKTFDSHLIMGTGGATSQALLEESLVASGTQLTTVAMRRHQATTSSGESIFAMLRRLEIALLPNTAGCRTARDAVLTAQLAREALDTNWVKVEVIADEHTLLPDTVELLDACELLVHDGFTVLAYTSDDPITASRLEDCGVAAVMPLGSPIGTGLGILNPHNIELICSRASVPVILDAGVGTASDATLAMELGCDGVLLASAINRAQNPVAMAKSMFHAVEAGRLAAQAGRIPQRQHAVASSSFEGLASWAEQVL.

The Schiff-base intermediate with DXP role is filled by lysine 96. 1-deoxy-D-xylulose 5-phosphate is bound by residues glycine 157, 183 to 184 (AG), and 205 to 206 (AS).

This sequence belongs to the ThiG family. In terms of assembly, homotetramer. Forms heterodimers with either ThiH or ThiS.

It is found in the cytoplasm. It carries out the reaction [ThiS sulfur-carrier protein]-C-terminal-Gly-aminoethanethioate + 2-iminoacetate + 1-deoxy-D-xylulose 5-phosphate = [ThiS sulfur-carrier protein]-C-terminal Gly-Gly + 2-[(2R,5Z)-2-carboxy-4-methylthiazol-5(2H)-ylidene]ethyl phosphate + 2 H2O + H(+). Its pathway is cofactor biosynthesis; thiamine diphosphate biosynthesis. Its function is as follows. Catalyzes the rearrangement of 1-deoxy-D-xylulose 5-phosphate (DXP) to produce the thiazole phosphate moiety of thiamine. Sulfur is provided by the thiocarboxylate moiety of the carrier protein ThiS. In vitro, sulfur can be provided by H(2)S. This chain is Thiazole synthase, found in Corynebacterium glutamicum (strain R).